The primary structure comprises 228 residues: Ribonuclease 3 1 (228 aa).

The RNase III domain maps to 1-124 (MYKLLMFRDD…VIGAYYLDNN (124 aa)). Glu37 provides a ligand contact to Mg(2+). Asp41 is a catalytic residue. Ser110 and Glu113 together coordinate Mg(2+). Glu113 is an active-site residue. Residues 153-223 (DSKNRFQEWV…AENALANLNK (71 aa)) form the DRBM domain.

It belongs to the ribonuclease III family. As to quaternary structure, homodimer. Mg(2+) serves as cofactor.

It is found in the cytoplasm. It carries out the reaction Endonucleolytic cleavage to 5'-phosphomonoester.. Digests double-stranded RNA. Involved in the processing of primary rRNA transcript to yield the immediate precursors to the large and small rRNAs (23S and 16S). Processes some mRNAs, and tRNAs when they are encoded in the rRNA operon. Processes pre-crRNA and tracrRNA of type II CRISPR loci if present in the organism. The chain is Ribonuclease 3 1 from Nostoc sp. (strain PCC 7120 / SAG 25.82 / UTEX 2576).